Reading from the N-terminus, the 334-residue chain is MKEIFLQISNRQDLSQDQVQVVFDRILKNEVSESQIASFLMGLKIKGETSDEITGIVRALKSHATVLPETFTDAMCNCGTGGDQSYSFNISTTACFVLAAGGIRMAKAGNRSISSKSGSADVLEVLGINVAASPEILSKALDEVGLAFIFAQTMHPAMRFIGPARQALGIPTIMNLVGPLANPLDLETQLMGLYRVELQEIVANAIQQLGRKRAVIITGPDNMDEAALYGTNTYTLLEDGHISQHTFTYEDLGMEKVELSDITGGDAKENAEILLSVLRNEASPYLETTVLNIGLGFFANGKAGTIKEGVELARQLIADGSALEKLRKLQEVQV.

5-phospho-alpha-D-ribose 1-diphosphate is bound by residues Gly79, 82 to 83, Ser87, 89 to 92, 107 to 115, and Ser119; these read GD, NIST, and KAGNRSISS. Gly79 provides a ligand contact to anthranilate. Residue Ser91 coordinates Mg(2+). Asn110 is an anthranilate binding site. An anthranilate-binding site is contributed by Arg165. 2 residues coordinate Mg(2+): Asp224 and Glu225.

This sequence belongs to the anthranilate phosphoribosyltransferase family. Homodimer. It depends on Mg(2+) as a cofactor.

The enzyme catalyses N-(5-phospho-beta-D-ribosyl)anthranilate + diphosphate = 5-phospho-alpha-D-ribose 1-diphosphate + anthranilate. Its pathway is amino-acid biosynthesis; L-tryptophan biosynthesis; L-tryptophan from chorismate: step 2/5. Functionally, catalyzes the transfer of the phosphoribosyl group of 5-phosphorylribose-1-pyrophosphate (PRPP) to anthranilate to yield N-(5'-phosphoribosyl)-anthranilate (PRA). This chain is Anthranilate phosphoribosyltransferase, found in Streptococcus thermophilus (strain ATCC BAA-250 / LMG 18311).